A 506-amino-acid polypeptide reads, in one-letter code: F-box protein At4g02760 (506 aa).

An F-box domain is found at 115-161 (TSWPLLPELTIKVFSMLDTKSLMQASACCTMFNKCAMDRVCYSHIDL). The disordered stretch occupies residues 452 to 506 (TFVAEFRSPSPSESDVRSPSPSSSSDSSSSSDSSSSSSSGESSDESGTEEEEDED). Over residues 459-492 (SPSPSESDVRSPSPSSSSDSSSSSDSSSSSSSGE) the composition is skewed to low complexity. Acidic residues predominate over residues 493–506 (SSDESGTEEEEDED).

The polypeptide is F-box protein At4g02760 (Arabidopsis thaliana (Mouse-ear cress)).